Reading from the N-terminus, the 340-residue chain is Glycerol-3-phosphate dehydrogenase [NAD(P)+] (340 aa).

Residues Ser-14, Phe-15, Arg-35, and Lys-108 each contribute to the NADPH site. Residues Lys-108 and Gly-136 each coordinate sn-glycerol 3-phosphate. Ala-140 provides a ligand contact to NADPH. Lys-191, Asp-244, Ser-254, Arg-255, and Asn-256 together coordinate sn-glycerol 3-phosphate. Residue Lys-191 is the Proton acceptor of the active site. Arg-255 is an NADPH binding site. Glu-281 lines the NADPH pocket.

The protein belongs to the NAD-dependent glycerol-3-phosphate dehydrogenase family.

It is found in the cytoplasm. It carries out the reaction sn-glycerol 3-phosphate + NAD(+) = dihydroxyacetone phosphate + NADH + H(+). The enzyme catalyses sn-glycerol 3-phosphate + NADP(+) = dihydroxyacetone phosphate + NADPH + H(+). It participates in membrane lipid metabolism; glycerophospholipid metabolism. Functionally, catalyzes the reduction of the glycolytic intermediate dihydroxyacetone phosphate (DHAP) to sn-glycerol 3-phosphate (G3P), the key precursor for phospholipid synthesis. The sequence is that of Glycerol-3-phosphate dehydrogenase [NAD(P)+] from Pseudomonas aeruginosa (strain LESB58).